The following is a 423-amino-acid chain: Probable electron transfer flavoprotein-quinone oxidoreductase YgcN (423 aa).

7 to 21 (IIIIGAGIAGTACAL) contributes to the FAD binding site.

This sequence belongs to the ETF-QO/FixC family. It depends on FAD as a cofactor.

Functionally, probably accepts electrons from YgcQ/YgcR and reduces a quinone. In Escherichia coli (strain K12), this protein is Probable electron transfer flavoprotein-quinone oxidoreductase YgcN (ygcN).